Reading from the N-terminus, the 674-residue chain is Tripartite terminase subunit 3 (674 aa).

Residues 212 to 219 carry the Walker A motif motif; the sequence is VPRRHGKT. The Walker B motif signature appears at 305-310; that stretch reads LLLVDE. The For ATPase activity role is filled by E310. Catalysis depends on for nuclease activity residues D463 and E534. The interval 580–600 is required for interaction with UL56 and DNA packaging; that stretch reads GRDKALAVEQFISRFNSGYIK. Residue D651 is the For nuclease activity of the active site.

The protein belongs to the herpesviridae TRM3 protein family. As to quaternary structure, interacts with the terminase subunits TRM1 and TRM2. Interacts with portal protein.

The protein resides in the host nucleus. Functionally, component of the molecular motor that translocates viral genomic DNA in empty capsid during DNA packaging. Forms a tripartite terminase complex together with TRM1 and TRM2 in the host cytoplasm. Once the complex reaches the host nucleus, it interacts with the capsid portal vertex. This portal forms a ring in which genomic DNA is translocated into the capsid. TRM3 carries an RNase H-like nuclease activity that plays an important role for the cleavage of concatemeric viral DNA into unit length genomes. This is Tripartite terminase subunit 3 from Homo sapiens (Human).